The sequence spans 74 residues: Exodeoxyribonuclease 7 small subunit (74 aa).

Belongs to the XseB family. As to quaternary structure, heterooligomer composed of large and small subunits.

It is found in the cytoplasm. The enzyme catalyses Exonucleolytic cleavage in either 5'- to 3'- or 3'- to 5'-direction to yield nucleoside 5'-phosphates.. Bidirectionally degrades single-stranded DNA into large acid-insoluble oligonucleotides, which are then degraded further into small acid-soluble oligonucleotides. The polypeptide is Exodeoxyribonuclease 7 small subunit (Leuconostoc citreum (strain KM20)).